Consider the following 300-residue polypeptide: Apolipoprotein E (300 aa).

The signal sequence occupies residues 1-18 (MKVLWAVLVVTLLAGCQA). An 8 X 22 AA approximate tandem repeats region spans residues 74 to 246 (VLMEDTMKEV…RLDEVREQME (173 aa)). 8 tandem repeats follow at residues 75–95 (LMEDTMKEVKAYKSELEQELA), 96–117 (PMAEETKARLSKELKAAQARLG), 118–139 (ADMEEVRNRLSQYRGEVQSMLG), 140–161 (HSAEELRARLATHLRKLRKRLL), 162–183 (RDAEDLQKRLAVYKAGASEGAE), 184–205 (RSVSAIRERLGSLVEQGRLRTA), 206–224 (ALTSQPLQERAQAWGERLR), and 225–243 (GRLEEVGSKARDRLDEVRE). Met137 bears the Methionine sulfoxide mark. Ser141 is modified (phosphoserine). The segment at 152–162 (HLRKLRKRLLR) is LDL and other lipoprotein receptors binding. 156–159 (LRKR) serves as a coordination point for heparin. A lipid-binding and lipoprotein association region spans residues 204–274 (TAALTSQPLQ…GWFEPMMEDI (71 aa)). 220-227 (GERLRGRL) is a binding site for heparin. The specificity for association with VLDL stretch occupies residues 262 to 274 (RLKGWFEPMMEDI).

It belongs to the apolipoprotein A1/A4/E family. As to quaternary structure, homotetramer. May interact with ABCA1; functionally associated with ABCA1 in the biogenesis of HDLs. May interact with APP/A4 amyloid-beta peptide; the interaction is extremely stable in vitro but its physiological significance is unclear. May interact with MAPT. May interact with MAP2. In the cerebrospinal fluid, interacts with secreted SORL1. Interacts with PMEL; this allows the loading of PMEL luminal fragment on ILVs to induce fibril nucleation. In terms of processing, APOE exists as multiple glycosylated and sialylated glycoforms within cells and in plasma. The extent of glycosylation and sialylation are tissue and context specific. Post-translationally, glycated in plasma VLDL. Phosphorylated by FAM20C in the extracellular medium.

It localises to the secreted. The protein localises to the extracellular space. It is found in the extracellular matrix. Its subcellular location is the extracellular vesicle. The protein resides in the endosome. It localises to the multivesicular body. Its function is as follows. APOE is an apolipoprotein, a protein associating with lipid particles, that mainly functions in lipoprotein-mediated lipid transport between organs via the plasma and interstitial fluids. APOE is a core component of plasma lipoproteins and is involved in their production, conversion and clearance. Apolipoproteins are amphipathic molecules that interact both with lipids of the lipoprotein particle core and the aqueous environment of the plasma. As such, APOE associates with chylomicrons, chylomicron remnants, very low density lipoproteins (VLDL) and intermediate density lipoproteins (IDL) but shows a preferential binding to high-density lipoproteins (HDL). It also binds a wide range of cellular receptors including the LDL receptor/LDLR, the LDL receptor-related proteins LRP1, LRP2 and LRP8 and the very low-density lipoprotein receptor/VLDLR that mediate the cellular uptake of the APOE-containing lipoprotein particles. Finally, APOE also has a heparin-binding activity and binds heparan-sulfate proteoglycans on the surface of cells, a property that supports the capture and the receptor-mediated uptake of APOE-containing lipoproteins by cells. A main function of APOE is to mediate lipoprotein clearance through the uptake of chylomicrons, VLDLs, and HDLs by hepatocytes. APOE is also involved in the biosynthesis by the liver of VLDLs as well as their uptake by peripheral tissues ensuring the delivery of triglycerides and energy storage in muscle, heart and adipose tissues. By participating in the lipoprotein-mediated distribution of lipids among tissues, APOE plays a critical role in plasma and tissues lipid homeostasis. APOE is also involved in two steps of reverse cholesterol transport, the HDLs-mediated transport of cholesterol from peripheral tissues to the liver, and thereby plays an important role in cholesterol homeostasis. First, it is functionally associated with ABCA1 in the biogenesis of HDLs in tissues. Second, it is enriched in circulating HDLs and mediates their uptake by hepatocytes. APOE also plays an important role in lipid transport in the central nervous system, regulating neuron survival and sprouting. The sequence is that of Apolipoprotein E (APOE) from Dinomys branickii (Pacarana).